Consider the following 378-residue polypeptide: Probable G-protein coupled receptor frpr-1 (378 aa).

7 consecutive transmembrane segments (helical) span residues 47–67, 85–105, 120–140, 180–200, 243–263, 277–297, and 315–337; these read LVVI…GNAL, LFAL…LFFL, AVLS…SVFI, VIVC…YNSP, TIVM…AIVI, IITL…PLTV, and SNLM…GSNF.

This sequence belongs to the G-protein coupled receptor 1 family.

It localises to the cell membrane. This Caenorhabditis elegans protein is Probable G-protein coupled receptor frpr-1.